The primary structure comprises 434 residues: Chaperone SurA (434 aa).

An N-terminal signal peptide occupies residues 1-20; it reads MKNWRTLILGLVICANTAFA. PpiC domains follow at residues 171–272 and 282–382; these read DTEL…KVND and VTEV…QLVD.

It is found in the periplasm. The enzyme catalyses [protein]-peptidylproline (omega=180) = [protein]-peptidylproline (omega=0). In terms of biological role, chaperone involved in the correct folding and assembly of outer membrane proteins. Recognizes specific patterns of aromatic residues and the orientation of their side chains, which are found more frequently in integral outer membrane proteins. May act in both early periplasmic and late outer membrane-associated steps of protein maturation. This is Chaperone SurA from Yersinia pestis bv. Antiqua (strain Antiqua).